Here is a 490-residue protein sequence, read N- to C-terminus: Aspartyl/glutamyl-tRNA(Asn/Gln) amidotransferase subunit B (490 aa).

Belongs to the GatB/GatE family. GatB subfamily. As to quaternary structure, heterotrimer of A, B and C subunits.

The catalysed reaction is L-glutamyl-tRNA(Gln) + L-glutamine + ATP + H2O = L-glutaminyl-tRNA(Gln) + L-glutamate + ADP + phosphate + H(+). It catalyses the reaction L-aspartyl-tRNA(Asn) + L-glutamine + ATP + H2O = L-asparaginyl-tRNA(Asn) + L-glutamate + ADP + phosphate + 2 H(+). Its function is as follows. Allows the formation of correctly charged Asn-tRNA(Asn) or Gln-tRNA(Gln) through the transamidation of misacylated Asp-tRNA(Asn) or Glu-tRNA(Gln) in organisms which lack either or both of asparaginyl-tRNA or glutaminyl-tRNA synthetases. The reaction takes place in the presence of glutamine and ATP through an activated phospho-Asp-tRNA(Asn) or phospho-Glu-tRNA(Gln). The sequence is that of Aspartyl/glutamyl-tRNA(Asn/Gln) amidotransferase subunit B from Methylorubrum extorquens (strain CM4 / NCIMB 13688) (Methylobacterium extorquens).